The primary structure comprises 205 residues: Holliday junction branch migration complex subunit RuvA (205 aa).

Residues 1-64 (MIGRLRGIIL…EDAQLLYGFN (64 aa)) are domain I. Positions 65–143 (DKQERALFRE…GLNGDLFNNT (79 aa)) are domain II. The flexible linker stretch occupies residues 144-156 (GDIQLPASNSSQI). The domain III stretch occupies residues 157 to 205 (SDADIEAEAASALVALGYKPQEASRLVSKIAKPGADCETLIRDALRAAL).

This sequence belongs to the RuvA family. Homotetramer. Forms an RuvA(8)-RuvB(12)-Holliday junction (HJ) complex. HJ DNA is sandwiched between 2 RuvA tetramers; dsDNA enters through RuvA and exits via RuvB. An RuvB hexamer assembles on each DNA strand where it exits the tetramer. Each RuvB hexamer is contacted by two RuvA subunits (via domain III) on 2 adjacent RuvB subunits; this complex drives branch migration. In the full resolvosome a probable DNA-RuvA(4)-RuvB(12)-RuvC(2) complex forms which resolves the HJ.

The protein localises to the cytoplasm. Its function is as follows. The RuvA-RuvB-RuvC complex processes Holliday junction (HJ) DNA during genetic recombination and DNA repair, while the RuvA-RuvB complex plays an important role in the rescue of blocked DNA replication forks via replication fork reversal (RFR). RuvA specifically binds to HJ cruciform DNA, conferring on it an open structure. The RuvB hexamer acts as an ATP-dependent pump, pulling dsDNA into and through the RuvAB complex. HJ branch migration allows RuvC to scan DNA until it finds its consensus sequence, where it cleaves and resolves the cruciform DNA. This chain is Holliday junction branch migration complex subunit RuvA, found in Yersinia enterocolitica serotype O:8 / biotype 1B (strain NCTC 13174 / 8081).